We begin with the raw amino-acid sequence, 303 residues long: Protoheme IX farnesyltransferase (303 aa).

The next 6 membrane-spanning stretches (helical) occupy residues 25-45, 54-74, 118-138, 166-186, 230-250, and 280-300; these read MGLV…AIVM, IPQI…ACAL, CLFL…VGYV, IGWV…FLVV, LVLL…FVVI, and FVYS…VSLI.

It belongs to the UbiA prenyltransferase family. Protoheme IX farnesyltransferase subfamily. As to quaternary structure, interacts with CtaA.

The protein localises to the cell membrane. It catalyses the reaction heme b + (2E,6E)-farnesyl diphosphate + H2O = Fe(II)-heme o + diphosphate. Its pathway is porphyrin-containing compound metabolism; heme O biosynthesis; heme O from protoheme: step 1/1. Converts heme B (protoheme IX) to heme O by substitution of the vinyl group on carbon 2 of heme B porphyrin ring with a hydroxyethyl farnesyl side group. In Staphylococcus epidermidis (strain ATCC 35984 / DSM 28319 / BCRC 17069 / CCUG 31568 / BM 3577 / RP62A), this protein is Protoheme IX farnesyltransferase.